Consider the following 541-residue polypeptide: MASKDVKFAGDARARLLSGIDTLADAVKVTLGPKGRNVVIDKSFGAPRITKDGVTVAKEIELSDKFENLGAQLLREVASKTNDLAGDGTTTATVLAQSIVREGLKAVAAGFNPQDVKRGIDHATTAVIEELRTRTRPIATREETAQVATISANGEVEIGRIISEAVQKVGKDGVITVEEAKGFETELDVVEGLQFDRGYISPYFVTNSEKLIADLENPYILIHEKKLSSLQPLLPLLENVVKSGRPLLSIAEDVEGEALATLVVNKLRGGLKIAAVKAPGFGDRRKAILEDIAILTGGEVISEDLGIKLESVTLSQLGQARRIVIDKDNTTIVDGEGDADAIKGRVGQIRAQIEETTSDYDREKLQERLAKLAGGVAIIRVGGSTEIEVKERKDRVDDALNATRAAVEEGIVPGGGTALARAAEVVARLQFHNDDQRIGGDIVRKALQAPLRQIAENAGEDGAVVAGKVLENGAYNFGFDAQIGEFKDLVAAGIIDPTKVVRTALQDAASVGSLLITTEVLVTEKAEPKPAAPPAGADLGY.

Residues 30 to 33 (TLGP), Lys51, 87 to 91 (DGTTT), Gly415, and Asp496 contribute to the ATP site.

It belongs to the chaperonin (HSP60) family. Forms a cylinder of 14 subunits composed of two heptameric rings stacked back-to-back. Interacts with the co-chaperonin GroES.

The protein resides in the cytoplasm. It catalyses the reaction ATP + H2O + a folded polypeptide = ADP + phosphate + an unfolded polypeptide.. In terms of biological role, together with its co-chaperonin GroES, plays an essential role in assisting protein folding. The GroEL-GroES system forms a nano-cage that allows encapsulation of the non-native substrate proteins and provides a physical environment optimized to promote and accelerate protein folding. The chain is Chaperonin GroEL 2 from Gluconacetobacter diazotrophicus (strain ATCC 49037 / DSM 5601 / CCUG 37298 / CIP 103539 / LMG 7603 / PAl5).